A 751-amino-acid chain; its full sequence is MYKDLKFPVLIVHRDIKADTVAGERVRGIAHELEQDGFSILSTASSAEGRIVASTHHGLACILVAAEGAGENQRLLQDVVELIRVARVRAPQLPIFALGEQVTIENAPAESMADLHQLRGILYLFEDTVPFLARQVARAARNYLAGLLPPFFRALVEHTAQSNYSWHTPGHGGGVAYRKSPVGQAFHQFFGENTLRSDLSVSVPELGSLLDHTGPLAEAEDRAARNFGADHTFFVINGTSTANKIVWHSMVGREDLVLVDRNCHKSILHSIIMTGAIPLYLTPERNELGIIGPIPLSEFSKQSIAAKIAASPLARGREPKVKLAVVTNSTYDGLCYNAELIKQTLGDSVEVLHFDEAWYAYAAFHEFYDGRYGMGTSRSEEGPLVFATHSTHKMLAAFSQASMIHVQDGGTRKLDVARFNEAFMMHISTSPQYGIIASLDVASAMMEGPAGRSLIQETFDEALSFRRALANVRQNLDRNDWWFGVWQPEQVEGTDQVGTHDWVLEPSADWHGFGDIAEDYVLLDPIKVTLTTPGLSAGGKLSEQGIPAAIVSRFLWERGLVVEKTGLYSFLVLFSMGITKGKWSTLVTELLEFKRCYDANLPLLDVLPSVAQAGGKRYNGVGLRDLSDAMHASYRDNATAKAMKRMYTVLPEVAMRPSEAYDKLVRGEVEAVPIARLEGRIAAVMLVPYPPGIPLIMPGERFTEATRSILDYLEFARTFERAFPGFDSDVHGLQHQDGPSGRCYTVECIKE.

The protein belongs to the Orn/Lys/Arg decarboxylase class-I family. As to quaternary structure, homodecamer.

It carries out the reaction L-lysine + H(+) = cadaverine + CO2. In terms of biological role, plays an essential role in lysine utilization by acting as a lysine decarboxylase. The polypeptide is Lysine decarboxylase LdcA (Pseudomonas aeruginosa (strain ATCC 15692 / DSM 22644 / CIP 104116 / JCM 14847 / LMG 12228 / 1C / PRS 101 / PAO1)).